A 123-amino-acid polypeptide reads, in one-letter code: Putative oocyte-secreted protein 1 homolog (123 aa).

The first 26 residues, 1-26 (MKTILGFKGLFYLHSLIWTCAGDWSA), serve as a signal peptide directing secretion.

This sequence belongs to the PLAC1 family.

It localises to the secreted. Functionally, may be involved in cell differentiation. This is Putative oocyte-secreted protein 1 homolog (OOSP1) from Homo sapiens (Human).